Consider the following 376-residue polypeptide: Alpha-centractin (376 aa).

Met1 bears the N-acetylmethionine mark.

Belongs to the actin family. ARP1 subfamily. Part of the ACTR1A/ACTB filament around which the dynactin complex is built. The filament contains 8 copies of ACTR1A and 1 ACTB. Interacts with dynein and adapters such as BICD2. Interacts with BCCIP (isoform 2/alpha).

It is found in the cytoplasm. The protein localises to the cytoskeleton. Its subcellular location is the microtubule organizing center. The protein resides in the centrosome. It localises to the cell cortex. Its function is as follows. Part of the ACTR1A/ACTB filament around which the dynactin complex is built. The dynactin multiprotein complex activates the molecular motor dynein for ultra-processive transport along microtubules. The chain is Alpha-centractin (ACTR1A) from Canis lupus familiaris (Dog).